The sequence spans 158 residues: Large ribosomal subunit protein uL11 (158 aa).

The protein belongs to the universal ribosomal protein uL11 family. Part of the ribosomal stalk of the 50S ribosomal subunit. Interacts with L10 and the large rRNA to form the base of the stalk. L10 forms an elongated spine to which L12 dimers bind in a sequential fashion forming a multimeric L10(L12)X complex.

Functionally, forms part of the ribosomal stalk which helps the ribosome interact with GTP-bound translation factors. This Methanosphaerula palustris (strain ATCC BAA-1556 / DSM 19958 / E1-9c) protein is Large ribosomal subunit protein uL11.